A 306-amino-acid polypeptide reads, in one-letter code: MATITAKMVGDLRAKTDAPMMECKKALTEADGNMEKAEELLRVKLGNKASKAASRVTAEGVVASAVSGSTGALIEVNCETDFVSKNDSFLAFVQACVNLVVEHNPADVAALSALPLAMEDFGPTVEDVRKGLIGKIGENLAIRRFKRYGDGGSLAHYLHGVRIGVMVEYSGDAVAAKDVAMHIAAMKPVSLTSADVSADLIEKERAVAAGKAAEDAKAAEAAGKPAQSAEIVAKRIEGSIQKFLKEVSLFNQTFVKNDKQTVEQMLKAAGTTVKGFTMYVVGEGIEKKQDDFAAEVAAQVAAAKGQ.

The tract at residues 80–83 (TDFV) is involved in Mg(2+) ion dislocation from EF-Tu.

This sequence belongs to the EF-Ts family.

It is found in the cytoplasm. Functionally, associates with the EF-Tu.GDP complex and induces the exchange of GDP to GTP. It remains bound to the aminoacyl-tRNA.EF-Tu.GTP complex up to the GTP hydrolysis stage on the ribosome. The polypeptide is Elongation factor Ts (Leptothrix cholodnii (strain ATCC 51168 / LMG 8142 / SP-6) (Leptothrix discophora (strain SP-6))).